The chain runs to 279 residues: Thymidylate synthase (279 aa).

R133–R134 contacts dUMP. C154 functions as the Nucleophile in the catalytic mechanism. DUMP-binding positions include R178–D181, N189, and H219–Y221. D181 lines the (6R)-5,10-methylene-5,6,7,8-tetrahydrofolate pocket. A278 provides a ligand contact to (6R)-5,10-methylene-5,6,7,8-tetrahydrofolate.

This sequence belongs to the thymidylate synthase family. Bacterial-type ThyA subfamily. In terms of assembly, homodimer.

It is found in the cytoplasm. The catalysed reaction is dUMP + (6R)-5,10-methylene-5,6,7,8-tetrahydrofolate = 7,8-dihydrofolate + dTMP. It participates in pyrimidine metabolism; dTTP biosynthesis. In terms of biological role, catalyzes the reductive methylation of 2'-deoxyuridine-5'-monophosphate (dUMP) to 2'-deoxythymidine-5'-monophosphate (dTMP) while utilizing 5,10-methylenetetrahydrofolate (mTHF) as the methyl donor and reductant in the reaction, yielding dihydrofolate (DHF) as a by-product. This enzymatic reaction provides an intracellular de novo source of dTMP, an essential precursor for DNA biosynthesis. This is Thymidylate synthase from Streptococcus gordonii (strain Challis / ATCC 35105 / BCRC 15272 / CH1 / DL1 / V288).